Here is a 314-residue protein sequence, read N- to C-terminus: Ribosomal RNA small subunit methyltransferase H (314 aa).

S-adenosyl-L-methionine-binding positions include Gly-37–His-39, Asp-56, Phe-86, Asp-108, and His-115.

This sequence belongs to the methyltransferase superfamily. RsmH family.

The protein localises to the cytoplasm. The catalysed reaction is cytidine(1402) in 16S rRNA + S-adenosyl-L-methionine = N(4)-methylcytidine(1402) in 16S rRNA + S-adenosyl-L-homocysteine + H(+). Its function is as follows. Specifically methylates the N4 position of cytidine in position 1402 (C1402) of 16S rRNA. This Leptospira biflexa serovar Patoc (strain Patoc 1 / ATCC 23582 / Paris) protein is Ribosomal RNA small subunit methyltransferase H.